Here is a 289-residue protein sequence, read N- to C-terminus: Acetyl-coenzyme A carboxylase carboxyl transferase subunit beta (289 aa).

In terms of domain architecture, CoA carboxyltransferase N-terminal spans 28–289 (VMTKCPKCKK…QGGEMAVWQS (262 aa)). Zn(2+) is bound by residues Cys32, Cys35, Cys51, and Cys54. The segment at 32–54 (CPKCKKIMYTKEVLKNLKVCVNC) adopts a C4-type zinc-finger fold.

This sequence belongs to the AccD/PCCB family. As to quaternary structure, acetyl-CoA carboxylase is a heterohexamer composed of biotin carboxyl carrier protein (AccB), biotin carboxylase (AccC) and two subunits each of ACCase subunit alpha (AccA) and ACCase subunit beta (AccD). Zn(2+) serves as cofactor.

It is found in the cytoplasm. It carries out the reaction N(6)-carboxybiotinyl-L-lysyl-[protein] + acetyl-CoA = N(6)-biotinyl-L-lysyl-[protein] + malonyl-CoA. The protein operates within lipid metabolism; malonyl-CoA biosynthesis; malonyl-CoA from acetyl-CoA: step 1/1. Component of the acetyl coenzyme A carboxylase (ACC) complex. Biotin carboxylase (BC) catalyzes the carboxylation of biotin on its carrier protein (BCCP) and then the CO(2) group is transferred by the transcarboxylase to acetyl-CoA to form malonyl-CoA. This chain is Acetyl-coenzyme A carboxylase carboxyl transferase subunit beta, found in Bacillus thuringiensis (strain Al Hakam).